A 351-amino-acid polypeptide reads, in one-letter code: Protein arginine N-methyltransferase 1-B (351 aa).

Positions 30–331 (KDYYFDSYAH…KNNRDLDFTV (302 aa)) constitute an SAM-dependent MTase PRMT-type domain. 5 residues coordinate S-adenosyl-L-methionine: His43, Arg52, Gly76, Glu98, and Glu127. Catalysis depends on residues Glu142 and Glu151.

This sequence belongs to the class I-like SAM-binding methyltransferase superfamily. Protein arginine N-methyltransferase family. Homodimer. Homooctamer; individual homodimers associates to form a homooctamer and homooligomerization is required for proper localization to the cell membrane. Individual homodimers can associate to form a homohexamer. Component of a complex with lsm14a/rap55a. Interacts with cirbp. From the onset of gastrulation, expressed in dorsal mesoderm, and in dorsal and ventral ectoderm. At the neurula and tail bud stages, expression is restricted to the neuroectoderm, with highest expression in the anterior neural plate.

Its subcellular location is the nucleus. It localises to the nucleoplasm. The protein resides in the cytoplasm. The protein localises to the cytosol. The catalysed reaction is L-arginyl-[protein] + 2 S-adenosyl-L-methionine = N(omega),N(omega)-dimethyl-L-arginyl-[protein] + 2 S-adenosyl-L-homocysteine + 2 H(+). It carries out the reaction L-arginyl-[protein] + S-adenosyl-L-methionine = N(omega)-methyl-L-arginyl-[protein] + S-adenosyl-L-homocysteine + H(+). It catalyses the reaction N(omega)-methyl-L-arginyl-[protein] + S-adenosyl-L-methionine = N(omega),N(omega)-dimethyl-L-arginyl-[protein] + S-adenosyl-L-homocysteine + H(+). Functionally, arginine methyltransferase that methylates (mono and asymmetric dimethylation) the guanidino nitrogens of arginyl residues present in target proteins. Constitutes the main enzyme that mediates monomethylation and asymmetric dimethylation of histone H4 'Arg-4' (H4R3me1 and H4R3me2a, respectively), a specific tag for epigenetic transcriptional activation. Methylates ilf3 to regulate its DNA-binding activity. Required for neural induction, playing a key role in the control of epidermal versus neural cell fate choice. This chain is Protein arginine N-methyltransferase 1-B (prmt1-b), found in Xenopus laevis (African clawed frog).